Reading from the N-terminus, the 254-residue chain is Alcohol dehydrogenase (254 aa).

NAD(+) is bound at residue 10 to 33 (FVAGLGGIGLDTSREIVKSGPKNL). Residue serine 138 participates in substrate binding. Tyrosine 151 serves as the catalytic Proton acceptor.

The protein belongs to the short-chain dehydrogenases/reductases (SDR) family. As to quaternary structure, homodimer.

The catalysed reaction is a primary alcohol + NAD(+) = an aldehyde + NADH + H(+). It catalyses the reaction a secondary alcohol + NAD(+) = a ketone + NADH + H(+). The sequence is that of Alcohol dehydrogenase (Adh1) from Drosophila lacicola (Fruit fly).